We begin with the raw amino-acid sequence, 109 residues long: Ribonuclease P protein component (109 aa).

Belongs to the RnpA family. In terms of assembly, consists of a catalytic RNA component (M1 or rnpB) and a protein subunit.

The catalysed reaction is Endonucleolytic cleavage of RNA, removing 5'-extranucleotides from tRNA precursor.. In terms of biological role, RNaseP catalyzes the removal of the 5'-leader sequence from pre-tRNA to produce the mature 5'-terminus. It can also cleave other RNA substrates such as 4.5S RNA. The protein component plays an auxiliary but essential role in vivo by binding to the 5'-leader sequence and broadening the substrate specificity of the ribozyme. The polypeptide is Ribonuclease P protein component (Streptococcus agalactiae serotype Ia (strain ATCC 27591 / A909 / CDC SS700)).